Consider the following 289-residue polypeptide: Aquaporin PIP1-1 (289 aa).

The interval 1-36 is disordered; it reads MEGKEEDVRLGANRYSERQPIGTAAQGAGDDKDYKE. 2 consecutive transmembrane segments (helical) span residues 58 to 78 and 93 to 115; these read IAEF…VMGV and IAWS…SGGH. The NPA 1 motif lies at 117–119; sequence NPA. Transmembrane regions (helical) follow at residues 136-156, 178-198, and 212-232; these read IFYI…VKGF, GDGL…VFSA, and ILAP…TIPI. The NPA 2 motif lies at 238-240; the sequence is NPA. A helical transmembrane segment spans residues 260 to 280; that stretch reads IFWVGPFVGAALAAIYHQVII.

This sequence belongs to the MIP/aquaporin (TC 1.A.8) family. PIP (TC 1.A.8.11) subfamily. As to expression, expressed in roots, leaves and anthers.

The protein localises to the cell membrane. Its function is as follows. May function as water channel to facilitate the transport of water across cell membrane. In Oryza sativa subsp. japonica (Rice), this protein is Aquaporin PIP1-1 (PIP1-1).